The sequence spans 521 residues: MIALLRWGIARPSAPLRWSRCFATSTEKGDEGWQTVIGLEIHAQIKTGKKLFSKASTSYGHVPNTNVDVHDAAFPGTLPVLDINAIRLSIMTALALNCQINPRSTFDRKHYFYHDIPASYQITQHYNPLAWNGHLEIREGDNGSKRTFNIGIKQLQVEQDTAKSQTVGDAVLVDLNRAGTGLMEIVTDPDMRSPEEAGAFVKKLQGLLRRVGSADGDMEKGNLRVDVNVSVHRPGMPFGTRCEIKNINSVRFLQAAIESERQRHIAHYCTSPLEPLAQETRGFNELTLQTYSLRSKEEATDYRYMPDHNLPAIIIDDGYLDSLWKNLPEMPWQSVERLVKTYGVTKRDAETLLGLDEYSAQGIAYFEEVVEQDKKIAKKATNWIAHELLGQLGKAIRPWTPTIVPAPLMHELVTAVESREITGTTGKAIVKHFVSLPESASLPPSFAELLAELGLTPSAASVEDLTETCKKAMNNQPKAVADFKKGNEKVVMRLVGEVMKLSGGKADAMKAKDILLDLLKD.

Residues 1 to 22 (MIALLRWGIARPSAPLRWSRCF) constitute a mitochondrion transit peptide.

This sequence belongs to the GatB/GatE family. GatB subfamily. Subunit of the heterotrimeric GatCAB amidotransferase (AdT) complex, composed of A, B and C subunits.

Its subcellular location is the mitochondrion. It carries out the reaction L-glutamyl-tRNA(Gln) + L-glutamine + ATP + H2O = L-glutaminyl-tRNA(Gln) + L-glutamate + ADP + phosphate + H(+). In terms of biological role, allows the formation of correctly charged Gln-tRNA(Gln) through the transamidation of misacylated Glu-tRNA(Gln) in the mitochondria. The reaction takes place in the presence of glutamine and ATP through an activated gamma-phospho-Glu-tRNA(Gln). The protein is Glutamyl-tRNA(Gln) amidotransferase subunit B, mitochondrial of Cryptococcus neoformans var. neoformans serotype D (strain JEC21 / ATCC MYA-565) (Filobasidiella neoformans).